The sequence spans 208 residues: Uracil phosphoribosyltransferase (208 aa).

5-phospho-alpha-D-ribose 1-diphosphate contacts are provided by residues arginine 78, arginine 103, and aspartate 130–serine 138. Residues isoleucine 193 and glycine 198 to alanine 200 each bind uracil. Position 199 (aspartate 199) interacts with 5-phospho-alpha-D-ribose 1-diphosphate.

It belongs to the UPRTase family. Mg(2+) is required as a cofactor.

The enzyme catalyses UMP + diphosphate = 5-phospho-alpha-D-ribose 1-diphosphate + uracil. It participates in pyrimidine metabolism; UMP biosynthesis via salvage pathway; UMP from uracil: step 1/1. Its activity is regulated as follows. Allosterically activated by GTP. In terms of biological role, catalyzes the conversion of uracil and 5-phospho-alpha-D-ribose 1-diphosphate (PRPP) to UMP and diphosphate. The protein is Uracil phosphoribosyltransferase of Haemophilus ducreyi (strain 35000HP / ATCC 700724).